Consider the following 449-residue polypeptide: Lipase (449 aa).

The first 23 residues, 1 to 23 (MGVFDYKNLGTEASKTLFADATA), serve as a signal peptide directing secretion. The disordered stretch occupies residues 58–77 (RQHRLPGSDPPAFPGILTRK). Catalysis depends on serine 206, which acts as the Charge relay system. Residues glycine 318, aspartate 387, and aspartate 396 each contribute to the Ca(2+) site. Hemolysin-type calcium-binding repeat units lie at residues 372-389 (IGSDGNDLIQGGKGADFI) and 390-407 (EGGKGNDTIRDNSGHNTF).

Belongs to the AB hydrolase superfamily. Lipase family.

It carries out the reaction a triacylglycerol + H2O = a diacylglycerol + a fatty acid + H(+). The protein is Lipase of Pseudomonas fluorescens.